The primary structure comprises 1009 residues: MKTNFVILLLLLCVFAISPSQQEEINQHNPGIYHQKLLYKVQQWRTSLKESNSVELKLSLAAIVAGVLYFLAALISSACGIGSGGLFIPITTLVSRLDLKTGKRFLGQYLIWVILLLGQLHECKSCIEKERVALLDFKKYWMSITQESDLDYVFPTWNNDTKSDCCQWESIMCNPTSGRLIRLHVGASNLKENSLLNISLLHPFEEVRSLELSAGLNGFVDNVEGYKSLRKLKNLEILDLSYNNRFNNNILPFINAATSLTSLSLQNNSMEGPFPFEEIKDLTNLKLLDLSRNILKGPMQGLTHLKKLKALDLSNNVFSSIMELQVVCEMKNLWELDLRENKFVGQLPLCLGRLNKLRVLDLSSNQLNGNLPSTFNRLESLEYLSLLDNNFTGFFSFDPLANLTKLKVFKLSSTSDMLQIKTESEPKYQFQLSVVVIRVCSLEKIPSFLLQDNLFTIFQMPATIVHELQFLDFSVNDISGLLPDNIGYALPNLLRMNGSRNGFQGHLPSSMGEMVNITSLDLSYNNFSGKLPRRFVTGCFSLKHLKLSHNNFSGHFLPRETSFTSLEELRVDSNSFTGKIGVGLLSSNTTLSVLDMSNNFLTGDIPSWMSNLSGLTILSISNNFLEGTIPPSLLAIGFLSLIDLSGNLLSGSLPSRVGGEFGIKLFLHDNMLTGPIPDTLLEKVQILDLRYNQLSGSIPQFVNTESIYILLMKGNNLTGSMSRQLCDLRNIRLLDLSDNKLNGFIPSCLYNLSFGPEDTNSYVGTAITKITPFKFYESTFVVEDFVVISSSFQEIEIKFSMKRRYDSYFGATEFNNDVLDYMYGMDLSSNELSGVIPAELGSLSKLRVMNLSCNFLSSSIPSSFSNLKDIESLDLSHNMLQGSIPQQLTNLSSLVVFDVSYNNLSGIIPQGRQFNTFDEKSYLGNPLLCGPPTNRSCDAKKTSDESENGGEEEDDEAPVDMLAFYFSSASTYVTTLIGIFILMCFDCPLRRAWLRIVDASIASVKSMLP.

The N-terminal stretch at 1–22 is a signal peptide; that stretch reads MKTNFVILLLLLCVFAISPSQQ. The Extracellular portion of the chain corresponds to 23–961; the sequence is EEINQHNPGI…EEDDEAPVDM (939 aa). N-linked (GlcNAc...) asparagine glycans are attached at residues Asn-159 and Asn-197. An LRR 1; degenerate repeat occupies 204-231; it reads FEEVRSLELSAGLNGFVDNVEGYKSLRK. 25 LRR repeats span residues 232–255, 257–281, 282–305, 306–329, 331–354, 355–377, 379–402, 404–427, 442–465, 466–490, 492–514, 515–538, 540–565, 567–587, 588–612, 613–636, 638–660, 662–681, 682–705, 707–728, 729–752, 819–842, 843–866, 867–891, and 893–916; these read LKNL…PFIN, ATSL…EIKD, LTNL…LTHL, KKLK…VVCE, KNLW…LGRL, NKLR…TFNR, ESLE…PLAN, TKLK…SEPK, LEKI…ATIV, HELQ…GYAL, NLLR…MGEM, VNIT…FVTG, FSLK…SFTS, EELR…LLSS, NTTL…MSNL, SGLT…LLAI, FLSL…VGGE, GIKL…DTLL, EKVQ…VNTE, IYIL…LCDL, RNIR…LYNL, LDYM…ELGS, LSKL…SFSN, LKDI…LTNL, and SLVV…QFNT. The N-linked (GlcNAc...) asparagine glycan is linked to Asn-267. N-linked (GlcNAc...) asparagine glycans are attached at residues Asn-390 and Asn-402. 4 N-linked (GlcNAc...) asparagine glycosylation sites follow: Asn-497, Asn-516, Asn-526, and Asn-551. N-linked (GlcNAc...) asparagine glycans are attached at residues Asn-588 and Asn-611. Asn-716 and Asn-751 each carry an N-linked (GlcNAc...) asparagine glycan. N-linked (GlcNAc...) asparagine glycans are attached at residues Asn-850, Asn-890, Asn-903, and Asn-934. Residues 934 to 955 are disordered; the sequence is NRSCDAKKTSDESENGGEEEDD. A compositionally biased stretch (acidic residues) spans 945-955; it reads ESENGGEEEDD. A helical membrane pass occupies residues 962-982; it reads LAFYFSSASTYVTTLIGIFIL. The Cytoplasmic segment spans residues 983–1009; sequence MCFDCPLRRAWLRIVDASIASVKSMLP.

The protein belongs to the RLP family.

It is found in the cell membrane. This Arabidopsis thaliana (Mouse-ear cress) protein is Putative receptor-like protein 8.